The sequence spans 1038 residues: Ras GTPase-activating protein 1 (1038 aa).

M1 carries the post-translational modification N-acetylmethionine. Residues 1 to 16 (MMAAEAGSEEGGPATA) show a composition bias toward low complexity. Disordered stretches follow at residues 1–24 (MMAA…AAAT) and 117–152 (ETLG…SLDG). A compositionally biased stretch (pro residues) spans 124 to 135 (GFPPLPPPPLLP). Residues 172 to 263 (WYHGKLDRTI…LKGEKLLYPV (92 aa)) form the SH2 1 domain. The SH3 domain occupies 270–332 (EDRRRVRAIL…VEDLVEEVGR (63 aa)). Residues 342–432 (WFHGKISKQE…VEGYYLKEPV (91 aa)) form the SH2 2 domain. Positions 465–568 (NIVKKGYLLK…WMKGLQAFCS (104 aa)) constitute a PH domain. The region spanning 568–681 (SLRKSSPGTS…QKGHATDEWF (114 aa)) is the C2 domain. Phosphotyrosine is present on Y606. A Ras-GAP domain is found at 755–965 (KLESLLLCTL…HRMIMFLDEL (211 aa)). A Phosphoserine modification is found at S822.

As to quaternary structure, interacts with SQSTM1. Interacts with SPSB1; the interaction does not promote degradation. Interacts with CAV2 (tyrosine phosphorylated form). Directly interacts with NCK1. Interacts with PDGFRB (tyrosine phosphorylated). Interacts (via SH2 domain) with the 'Tyr-9' phosphorylated form of PDPK1. Interacts with tyrosine-phosphorylated EPHB4. Post-translationally, phosphorylated by SRC and LCK. The phosphorylation SRC inhibits its ability to stimulate the Ras-GTPase activity, whereas phosphorylation by LCK does not display any effect on stimulation activity.

The protein resides in the cytoplasm. Its function is as follows. Inhibitory regulator of the Ras-cyclic AMP pathway. Stimulates the GTPase of normal but not oncogenic Ras p21. The chain is Ras GTPase-activating protein 1 (Rasa1) from Rattus norvegicus (Rat).